We begin with the raw amino-acid sequence, 376 residues long: Beta-centractin (376 aa).

N-acetylmethionine is present on Met1. The residue at position 4 (Tyr4) is a 3'-nitrotyrosine.

This sequence belongs to the actin family. ARP1 subfamily.

The protein resides in the cytoplasm. It is found in the cytoskeleton. The protein localises to the microtubule organizing center. It localises to the centrosome. Component of a multi-subunit complex involved in microtubule based vesicle motility. It is associated with the centrosome. This chain is Beta-centractin (Actr1b), found in Mus musculus (Mouse).